We begin with the raw amino-acid sequence, 232 residues long: Large ribosomal subunit protein uL1 (232 aa).

This sequence belongs to the universal ribosomal protein uL1 family. Part of the 50S ribosomal subunit.

In terms of biological role, binds directly to 23S rRNA. The L1 stalk is quite mobile in the ribosome, and is involved in E site tRNA release. Protein L1 is also a translational repressor protein, it controls the translation of the L11 operon by binding to its mRNA. The protein is Large ribosomal subunit protein uL1 of Paraburkholderia phymatum (strain DSM 17167 / CIP 108236 / LMG 21445 / STM815) (Burkholderia phymatum).